The primary structure comprises 366 residues: UDP-N-acetylglucosamine--N-acetylmuramyl-(pentapeptide) pyrophosphoryl-undecaprenol N-acetylglucosamine transferase (366 aa).

UDP-N-acetyl-alpha-D-glucosamine contacts are provided by residues Thr10–Gly12, Asn124, Arg166, Ser196, and Gln297.

This sequence belongs to the glycosyltransferase 28 family. MurG subfamily.

It is found in the cell membrane. It carries out the reaction di-trans,octa-cis-undecaprenyl diphospho-N-acetyl-alpha-D-muramoyl-L-alanyl-D-glutamyl-meso-2,6-diaminopimeloyl-D-alanyl-D-alanine + UDP-N-acetyl-alpha-D-glucosamine = di-trans,octa-cis-undecaprenyl diphospho-[N-acetyl-alpha-D-glucosaminyl-(1-&gt;4)]-N-acetyl-alpha-D-muramoyl-L-alanyl-D-glutamyl-meso-2,6-diaminopimeloyl-D-alanyl-D-alanine + UDP + H(+). It functions in the pathway cell wall biogenesis; peptidoglycan biosynthesis. In terms of biological role, cell wall formation. Catalyzes the transfer of a GlcNAc subunit on undecaprenyl-pyrophosphoryl-MurNAc-pentapeptide (lipid intermediate I) to form undecaprenyl-pyrophosphoryl-MurNAc-(pentapeptide)GlcNAc (lipid intermediate II). In Alkaliphilus metalliredigens (strain QYMF), this protein is UDP-N-acetylglucosamine--N-acetylmuramyl-(pentapeptide) pyrophosphoryl-undecaprenol N-acetylglucosamine transferase.